Here is a 299-residue protein sequence, read N- to C-terminus: Nitrogenase iron protein (299 aa).

8–15 (GKGGIGKS) contributes to the ATP binding site. Cysteine 96 is a [4Fe-4S] cluster binding site. Arginine 99 carries the post-translational modification ADP-ribosylarginine; by dinitrogenase reductase ADP-ribosyltransferase. [4Fe-4S] cluster is bound at residue cysteine 130.

This sequence belongs to the NifH/BchL/ChlL family. As to quaternary structure, homodimer. Requires [4Fe-4S] cluster as cofactor. In terms of processing, the reversible ADP-ribosylation of Arg-99 inactivates the nitrogenase reductase and regulates nitrogenase activity.

The enzyme catalyses N2 + 8 reduced [2Fe-2S]-[ferredoxin] + 16 ATP + 16 H2O = H2 + 8 oxidized [2Fe-2S]-[ferredoxin] + 2 NH4(+) + 16 ADP + 16 phosphate + 6 H(+). Functionally, the key enzymatic reactions in nitrogen fixation are catalyzed by the nitrogenase complex, which has 2 components: the iron protein and the molybdenum-iron protein. This chain is Nitrogenase iron protein, found in Gloeothece citriformis (strain PCC 7424) (Cyanothece sp. (strain PCC 7424)).